The following is a 125-amino-acid chain: MAISKEDVLEYISNLSVLELSELVKEFEEKFGVSAAPVMIAGGAAAGGAAAAAEEKTEFDIVLTDGGAKKIEVIKIVRALTGLGLKEAKDAVEQTPSTLKEGVAKAEAEEAKKQLEEAGAKVELK.

Belongs to the bacterial ribosomal protein bL12 family. Homodimer. Part of the ribosomal stalk of the 50S ribosomal subunit. Forms a multimeric L10(L12)X complex, where L10 forms an elongated spine to which 2 to 4 L12 dimers bind in a sequential fashion. Binds GTP-bound translation factors.

Forms part of the ribosomal stalk which helps the ribosome interact with GTP-bound translation factors. Is thus essential for accurate translation. This Campylobacter jejuni (strain RM1221) protein is Large ribosomal subunit protein bL12.